Reading from the N-terminus, the 225-residue chain is Thymidylate kinase (225 aa).

Gly15–Ser22 contacts ATP.

Belongs to the thymidylate kinase family.

It catalyses the reaction dTMP + ATP = dTDP + ADP. Functionally, phosphorylation of dTMP to form dTDP in both de novo and salvage pathways of dTTP synthesis. This chain is Thymidylate kinase, found in Protochlamydia amoebophila (strain UWE25).